The sequence spans 280 residues: MDLRRRALLGVDGLRVLLMLFHTVTRIMAEQEVENLSGLSTNPEKDIFVVRENGTTCLMAEFAAKFIVPYDVWASNYVDLITEQADISLTRGAEVKGHCGHDESELQVFWVDRAYALKMLFLKESHNTPKGPEATWKLSKVQFVYDSSEKTHFKDAVSAGKHTANSHHLSALVTPAGKSYECQAQQTISLASSDPQKTVTMILSAVHIQPFDIISDFVFSEEHKCPVDEREQLEETLPLILGLILGLVIVVTLVIYHIHHKMTANQVQIPRDRSQYKHMG.

Positions 1–29 are cleaved as a signal peptide; sequence MDLRRRALLGVDGLRVLLMLFHTVTRIMA. At 30 to 235 the chain is on the extracellular side; that stretch reads EQEVENLSGL…PVDEREQLEE (206 aa). 2 N-linked (GlcNAc...) asparagine glycosylation sites follow: N35 and N53. Residues 236–256 form a helical membrane-spanning segment; it reads TLPLILGLILGLVIVVTLVIY. Residues 257 to 280 are Cytoplasmic-facing; sequence HIHHKMTANQVQIPRDRSQYKHMG.

Belongs to the LAMP family. Post-translationally, glycosylated.

The protein resides in the cytoplasmic vesicle membrane. It is found in the cell membrane. It localises to the cell projection. Its subcellular location is the dendrite. The protein localises to the cytoplasmic vesicle. The protein resides in the secretory vesicle. It is found in the synaptic vesicle membrane. It localises to the growth cone membrane. Its subcellular location is the early endosome membrane. The protein localises to the recycling endosome. The protein resides in the endoplasmic reticulum-Golgi intermediate compartment membrane. It is found in the endosome membrane. In terms of biological role, plays a role in short-term synaptic plasticity in a subset of GABAergic neurons in the brain. This is Lysosome-associated membrane glycoprotein 5 (LAMP5) from Bos taurus (Bovine).